We begin with the raw amino-acid sequence, 2187 residues long: Non-reducing polyketide synthase phnA (2187 aa).

The interval 17 to 255 is N-terminal acylcarrier protein transacylase domain (SAT); that stretch reads LLFGDLSLAH…KYLDIDSPYH (239 aa). One can recognise a Ketosynthase family 3 (KS3) domain in the interval 383–819; the sequence is HSKIAIVGYS…GGNTAMLIED (437 aa). Catalysis depends on for beta-ketoacyl synthase activity residues C555, H690, and H735. A malonyl-CoA:ACP transacylase (MAT) domain region spans residues 926–1226; the sequence is RVAFAFTGQG…GMVKGTIDSR (301 aa). The active-site For acyl/malonyl transferase activity is the S1021. The segment at 1321–1637 is product template (PT) domain; sequence PCAQQIVEEF…PRRALDHLLP (317 aa). The interval 1324 to 1458 is N-terminal hotdog fold; it reads QQIVEEFHDS…LDVVLYPGQQ (135 aa). Residues 1324-1633 enclose the PKS/mFAS DH domain; the sequence is QQIVEEFHDS…FQGVPRRALD (310 aa). H1356 serves as the catalytic Proton acceptor; for dehydratase activity. A C-terminal hotdog fold region spans residues 1486–1633; sequence TETHLIKRGM…FQGVPRRALD (148 aa). D1546 (proton donor; for dehydratase activity) is an active-site residue. Residues 1652 to 1669 are compositionally biased toward low complexity; it reads KAPVAAVAPPRTPTKAAP. Positions 1652 to 1681 are disordered; sequence KAPVAAVAPPRTPTKAAPQSRQAAPKQKRS. 2 Carrier domains span residues 1684 to 1758 and 1796 to 1874; these read SDVF…SNSD and SSES…YNVM. S1718 is modified (O-(pantetheine 4'-phosphoryl)serine). A disordered region spans residues 1754-1796; sequence LSNSDEDDTPSGDSSTYEDSESQITSPASSVGPETPGGGEFGS. A compositionally biased stretch (acidic residues) spans 1757-1774; that stretch reads SDEDDTPSGDSSTYEDSE. S1834 is subject to O-(pantetheine 4'-phosphoryl)serine. The segment at 1906–2183 is thioesterase (TE) domain; that stretch reads SSLPQATSIL…PEMGEAVAEF (278 aa). The active-site For thioesterase activity is S2009.

It catalyses the reaction 6 malonyl-CoA + acetyl-CoA + 5 H(+) = 3,6,7,9-tetrahydroxy-3-methyl-2,3-dihydro-1H-naphtho[2,1-b]pyran-1-one + 6 CO2 + 7 CoA + H2O. It functions in the pathway secondary metabolite biosynthesis. In terms of biological role, non-reducing polyketide synthase; part of the gene cluster that mediates the biosynthesis of phenalenones such as herqueinone, compounds that have been reported to treat tumors, bacterial infections and/or mycoses, and rheumatic diseases. The non-reducing polyketide synthase phnA synthesizes the heptaketide backbone and cyclizes it into the angular, hemiketal-containing naphtho-gamma-pyrone prephenalenone. The product template (PT) domain of phnA catalyzes only the C4-C9 aldol condensation, which is unprecedented among known PT domains. The transformation of prephenalenone to phenalenones requires an FAD-dependent monooxygenase phnB, which catalyzes the C2 aromatic hydroxylation of prephenalenone and ring opening of the gamma-pyrone ring simultaneously. Subsequent intramolecular deprotonation of C3 phenolic oxygen accelerates phenalenone ring closure to yield the tricyclic phenalenone core with a C2 hydroxylation. The prenyltransferase phnF further catalyzes reverse C-prenylation of phenalenone by direct electrophilic substitution at C6, or possibly via first a forward O-prenylation of a neighboring phenol in phenalenone, followed by a Claisen rearrangement. The hydroalkoxylation enzyme phnH catalyzes the 5-exo-trig cyclization via acid catalysis after the spontaneous deprotonation of 7-OH, which leads to the formation of the dihydrobenzofuran atrovenetin. Atrovenetin is further converted to deoxyherqueinone by the O-methyltransferase phnC which can methylate C2-OH to stabilize the northern portion of the phenalenone core. Finally, the oxidoreductase phnG converts deoxyherqueinone to herqueinone via C6 hydroxylation. This chain is Non-reducing polyketide synthase phnA, found in Penicillium herquei.